A 335-amino-acid polypeptide reads, in one-letter code: Mevalonate kinase (335 aa).

An ATP-binding site is contributed by 111–121; the sequence is PVGAGLGSSAA. Residue Asp-162 is the Proton acceptor of the active site.

The protein belongs to the GHMP kinase family. Mevalonate kinase subfamily. As to quaternary structure, homodimer. The cofactor is Mg(2+).

The protein resides in the cytoplasm. The catalysed reaction is (R)-mevalonate + ATP = (R)-5-phosphomevalonate + ADP + H(+). Its pathway is isoprenoid biosynthesis; isopentenyl diphosphate biosynthesis via mevalonate pathway; isopentenyl diphosphate from (R)-mevalonate: step 1/3. Catalyzes the phosphorylation of (R)-mevalonate (MVA) to (R)-mevalonate 5-phosphate (MVAP). Functions in the mevalonate (MVA) pathway leading to isopentenyl diphosphate (IPP), a key precursor for the biosynthesis of isoprenoid compounds such as archaeal membrane lipids. This chain is Mevalonate kinase, found in Pyrococcus abyssi (strain GE5 / Orsay).